Reading from the N-terminus, the 360-residue chain is METLTVGLGDRSYTIRGGSGILPGIGAFCRELGLGRIVAVVTNTTVGPLYYGPVADSLAAAGFSPLRVELPDGEEFKTSATMNIIYDALIDGGLTRDSFIVALGGGVVGDMAGFAAATYLRGIPFVQVPTTLLAQVDSSVGGKTGINHPRGKNLIGAFYQPRAVVIDVETLTTLPEREYLAGMAEVVKYGVVLDPQLFAEVERNITPILARDRDVLTRIIMACCAIKASVVEKDERESGLRAVLNYGHTLGHAVETLAGYGTFLHGEAVAIGMVQAAKLAEHRGEATADDTGRLRALLESLKLPVELPVFAAEAYREVLLRDKKARDTGLSFVLNNGIGGFSIVRLRDLSEVIDVCGIGG.

Residues 72–77, 106–110, 130–131, Lys-143, Lys-152, and 170–173 each bind NAD(+); these read DGEEFK, GVVGD, TT, and TLTT. Residues Glu-185, His-248, and His-265 each coordinate Zn(2+).

It belongs to the sugar phosphate cyclases superfamily. Dehydroquinate synthase family. Co(2+) is required as a cofactor. Zn(2+) serves as cofactor. It depends on NAD(+) as a cofactor.

The protein resides in the cytoplasm. The catalysed reaction is 7-phospho-2-dehydro-3-deoxy-D-arabino-heptonate = 3-dehydroquinate + phosphate. The protein operates within metabolic intermediate biosynthesis; chorismate biosynthesis; chorismate from D-erythrose 4-phosphate and phosphoenolpyruvate: step 2/7. Catalyzes the conversion of 3-deoxy-D-arabino-heptulosonate 7-phosphate (DAHP) to dehydroquinate (DHQ). In Geobacter metallireducens (strain ATCC 53774 / DSM 7210 / GS-15), this protein is 3-dehydroquinate synthase.